Reading from the N-terminus, the 235-residue chain is Lipoprotein-releasing system ATP-binding protein LolD 1 (235 aa).

Residues 5 to 234 (FEARGITKSY…DGRLQLCTPL (230 aa)) enclose the ABC transporter domain. ATP is bound at residue 42–49 (GASGSGKT).

It belongs to the ABC transporter superfamily. Lipoprotein translocase (TC 3.A.1.125) family. In terms of assembly, the complex is composed of two ATP-binding proteins (LolD) and two transmembrane proteins (LolC and LolE).

The protein resides in the cell inner membrane. Part of the ABC transporter complex LolCDE involved in the translocation of mature outer membrane-directed lipoproteins, from the inner membrane to the periplasmic chaperone, LolA. Responsible for the formation of the LolA-lipoprotein complex in an ATP-dependent manner. This is Lipoprotein-releasing system ATP-binding protein LolD 1 from Chlorobium luteolum (strain DSM 273 / BCRC 81028 / 2530) (Pelodictyon luteolum).